Consider the following 211-residue polypeptide: Adenylyl-sulfate kinase (211 aa).

32 to 39 (GLSASGKS) contributes to the ATP binding site. The Phosphoserine intermediate role is filled by S107.

Belongs to the APS kinase family. In terms of assembly, homodimer.

It catalyses the reaction adenosine 5'-phosphosulfate + ATP = 3'-phosphoadenylyl sulfate + ADP + H(+). Its pathway is sulfur metabolism; hydrogen sulfide biosynthesis; sulfite from sulfate: step 2/3. Its function is as follows. Catalyzes the synthesis of activated sulfate. The polypeptide is Adenylyl-sulfate kinase (Penicillium chrysogenum (Penicillium notatum)).